Consider the following 922-residue polypeptide: Translation initiation factor IF-2 (922 aa).

The interval 33 to 310 (KTASSTVQPP…SKRQKRNEYE (278 aa)) is disordered. Over residues 75 to 87 (PAAKAAPKAAAKP) the composition is skewed to low complexity. Composition is skewed to pro residues over residues 88–98 (GPKPGPKPGPQ) and 140–150 (TPKPGAKPGPK). 2 stretches are compositionally biased toward low complexity: residues 151 to 169 (PGGAKPGAKPGPKPGGRAP) and 202 to 211 (PGSRPGGAKK). 2 stretches are compositionally biased toward gly residues: residues 215–225 (KPGGAKQGGGR) and 248–292 (FGGG…GRPG). Residues 296–305 (RKGRKSKRQK) are compositionally biased toward basic residues. Residues 418 to 590 (QRPPVVTVMG…VLLTADASLD (173 aa)) form the tr-type G domain. Residues 427 to 434 (GHVDHGKT) are G1. GTP is bound at residue 427-434 (GHVDHGKT). The segment at 452 to 456 (GITQH) is G2. The G3 stretch occupies residues 477–480 (DTPG). Residues 477 to 481 (DTPGH) and 531 to 534 (NKID) each bind GTP. A G4 region spans residues 531 to 534 (NKID). Residues 567-569 (SAK) form a G5 region.

Belongs to the TRAFAC class translation factor GTPase superfamily. Classic translation factor GTPase family. IF-2 subfamily.

It localises to the cytoplasm. In terms of biological role, one of the essential components for the initiation of protein synthesis. Protects formylmethionyl-tRNA from spontaneous hydrolysis and promotes its binding to the 30S ribosomal subunits. Also involved in the hydrolysis of GTP during the formation of the 70S ribosomal complex. This is Translation initiation factor IF-2 from Corynebacterium jeikeium (strain K411).